The sequence spans 462 residues: Anthranilate synthase component 1 (462 aa).

L-tryptophan contacts are provided by residues S37 and 244–246 (PYM). 279–280 (GT) serves as a coordination point for chorismate. Residue E306 participates in Mg(2+) binding. Chorismate contacts are provided by residues Y394, R414, 428 to 430 (GAG), and G430. E443 contributes to the Mg(2+) binding site.

Belongs to the anthranilate synthase component I family. As to quaternary structure, heterotetramer consisting of two non-identical subunits: a beta subunit (TrpG) and a large alpha subunit (TrpE). Mg(2+) is required as a cofactor.

It catalyses the reaction chorismate + L-glutamine = anthranilate + pyruvate + L-glutamate + H(+). It functions in the pathway amino-acid biosynthesis; L-tryptophan biosynthesis; L-tryptophan from chorismate: step 1/5. Its activity is regulated as follows. Feedback inhibited by tryptophan. Its function is as follows. Part of a heterotetrameric complex that catalyzes the two-step biosynthesis of anthranilate, an intermediate in the biosynthesis of L-tryptophan. In the first step, the glutamine-binding beta subunit (TrpG) of anthranilate synthase (AS) provides the glutamine amidotransferase activity which generates ammonia as a substrate that, along with chorismate, is used in the second step, catalyzed by the large alpha subunit of AS (TrpE) to produce anthranilate. In the absence of TrpG, TrpE can synthesize anthranilate directly from chorismate and high concentrations of ammonia. The protein is Anthranilate synthase component 1 (trpE) of Thermus thermophilus (strain ATCC 27634 / DSM 579 / HB8).